Reading from the N-terminus, the 258-residue chain is uncharacterized protein (258 aa).

This is an uncharacterized protein from Bacillus sp. (strain OxB-1).